A 257-amino-acid chain; its full sequence is 8-demethyl-8-aminoriboflavin-5'-phosphate synthase (257 aa).

FMN-binding positions include 11–13 (TLR), 19–21 (SQT), 91–94 (ITLN), 132–136 (CGNED), and Tyr240.

It belongs to the SsuE family. Homotetramer.

The catalysed reaction is FMN + L-glutamate + 3 A + O2 + H2O = 8-amino-8-demethylriboflavin 5'-phosphate + 2-oxoglutarate + 3 AH2 + CO2 + H(+). Its pathway is antibiotic biosynthesis. In terms of biological role, involved in the biosynthesis of the riboflavin analog antibiotic roseoflavin (3,8-dimethylamino-riboflavin). Catalyzes the site-specific substitution of the C-8 methyl group of riboflavin-5'-phosphate (FMN) by an amino group to yield 8-amino-8-demethylriboflavin 5'-phosphate, via a combined oxidation, decarboxylation and transamination reaction. The catalysis is initiated by an oxidation step in which the C-8 methyl group on the dimethylbenzene ring of FMN is converted to a formyl group to yield the 8-demethyl-8-formylriboflavin-5'-phosphate (OHC-RP) intermediate. In the presence of thiamine, the formyl group is oxidized into a carboxyl group to yield the 8-demethyl-8-carboxyriboflavin-5'-phosphate (HO2C-RP) intermediate. Finally, in the presence of L-glutamate as an amino donor, decarboxylation and aminotransfer occur, resulting in production of 8-demethyl-8-aminoriboflavin-5'-phosphate. Addition of NAD (but not NADP) to the reaction increases the yield 1.7-fold. The reaction also proceeds without the addition of any electron acceptor, and it is possible that molecular oxygen serves this role. The chain is 8-demethyl-8-aminoriboflavin-5'-phosphate synthase from Streptomyces davaonensis (strain DSM 101723 / JCM 4913 / KCC S-0913 / 768).